Reading from the N-terminus, the 168-residue chain is Small ribosomal subunit protein uS5 (168 aa).

The 64-residue stretch at 13 to 76 (LKEQVVDIKR…EDAKKNLIHV (64 aa)) folds into the S5 DRBM domain.

The protein belongs to the universal ribosomal protein uS5 family. In terms of assembly, part of the 30S ribosomal subunit. Contacts proteins S4 and S8.

Its function is as follows. With S4 and S12 plays an important role in translational accuracy. Functionally, located at the back of the 30S subunit body where it stabilizes the conformation of the head with respect to the body. In Alkaliphilus oremlandii (strain OhILAs) (Clostridium oremlandii (strain OhILAs)), this protein is Small ribosomal subunit protein uS5.